Reading from the N-terminus, the 1379-residue chain is DNA-directed RNA polymerase subunit beta'' (1379 aa).

Zn(2+) contacts are provided by Cys-224, Cys-295, Cys-302, and Cys-305. A disordered region spans residues 503-524 (SVQSLSVKRRSTSKLSETNDEA).

The protein belongs to the RNA polymerase beta' chain family. RpoC2 subfamily. In plastids the minimal PEP RNA polymerase catalytic core is composed of four subunits: alpha, beta, beta', and beta''. When a (nuclear-encoded) sigma factor is associated with the core the holoenzyme is formed, which can initiate transcription. Zn(2+) serves as cofactor.

The protein localises to the plastid. The catalysed reaction is RNA(n) + a ribonucleoside 5'-triphosphate = RNA(n+1) + diphosphate. DNA-dependent RNA polymerase catalyzes the transcription of DNA into RNA using the four ribonucleoside triphosphates as substrates. The chain is DNA-directed RNA polymerase subunit beta'' from Cuscuta exaltata (Tall dodder).